The chain runs to 359 residues: Probable dual-specificity RNA methyltransferase RlmN (359 aa).

The active-site Proton acceptor is glutamate 99. The Radical SAM core domain maps to 105 to 342 (TENRRTACVS…VTIRKSYGTT (238 aa)). An intrachain disulfide couples cysteine 112 to cysteine 347. Positions 119, 123, and 126 each coordinate [4Fe-4S] cluster. S-adenosyl-L-methionine contacts are provided by residues 171–172 (GE), serine 204, 227–229 (SLH), and asparagine 304. Cysteine 347 serves as the catalytic S-methylcysteine intermediate.

Belongs to the radical SAM superfamily. RlmN family. [4Fe-4S] cluster serves as cofactor.

The protein localises to the cytoplasm. It catalyses the reaction adenosine(2503) in 23S rRNA + 2 reduced [2Fe-2S]-[ferredoxin] + 2 S-adenosyl-L-methionine = 2-methyladenosine(2503) in 23S rRNA + 5'-deoxyadenosine + L-methionine + 2 oxidized [2Fe-2S]-[ferredoxin] + S-adenosyl-L-homocysteine. The catalysed reaction is adenosine(37) in tRNA + 2 reduced [2Fe-2S]-[ferredoxin] + 2 S-adenosyl-L-methionine = 2-methyladenosine(37) in tRNA + 5'-deoxyadenosine + L-methionine + 2 oxidized [2Fe-2S]-[ferredoxin] + S-adenosyl-L-homocysteine. Functionally, specifically methylates position 2 of adenine 2503 in 23S rRNA and position 2 of adenine 37 in tRNAs. The sequence is that of Probable dual-specificity RNA methyltransferase RlmN from Pelodictyon phaeoclathratiforme (strain DSM 5477 / BU-1).